Consider the following 212-residue polypeptide: LexA repressor (212 aa).

Residues 29 to 49 (VREIGEAVGLSSSSTIHGHIE) constitute a DNA-binding region (H-T-H motif). Catalysis depends on for autocatalytic cleavage activity residues Ser-133 and Lys-171.

This sequence belongs to the peptidase S24 family. As to quaternary structure, homodimer.

The catalysed reaction is Hydrolysis of Ala-|-Gly bond in repressor LexA.. In terms of biological role, represses a number of genes involved in the response to DNA damage (SOS response), including recA and lexA. In the presence of single-stranded DNA, RecA interacts with LexA causing an autocatalytic cleavage which disrupts the DNA-binding part of LexA, leading to derepression of the SOS regulon and eventually DNA repair. The polypeptide is LexA repressor (Leuconostoc mesenteroides subsp. mesenteroides (strain ATCC 8293 / DSM 20343 / BCRC 11652 / CCM 1803 / JCM 6124 / NCDO 523 / NBRC 100496 / NCIMB 8023 / NCTC 12954 / NRRL B-1118 / 37Y)).